Here is a 383-residue protein sequence, read N- to C-terminus: Putative dehydratase subunit YjiM (383 aa).

This sequence belongs to the FldB/FldC dehydratase alpha/beta subunit family.

In Escherichia coli (strain K12), this protein is Putative dehydratase subunit YjiM (yjiM).